We begin with the raw amino-acid sequence, 1840 residues long: Collagen alpha-1(V) chain (1840 aa).

The signal sequence occupies residues 1–30 (MDVHTRWKAPRPGAPLLSSPLLLLLLLLWA). Residues 72 to 244 (DVAYRVSKDA…DYCEHYSPDC (173 aa)) form the Laminin G-like domain. A nonhelical region region spans residues 231–445 (RAAYDYCEHY…MPANQDTIYE (215 aa)). Tyr-234, Tyr-236, Tyr-240, Tyr-262, Tyr-263, Tyr-336, Tyr-338, and Tyr-344 each carry sulfotyrosine. Disordered stretches follow at residues 241 to 547 (SPDC…QESQ) and 561 to 1576 (GPAG…EVIQ). Acidic residues predominate over residues 258 to 268 (NPDEYYPEGEG). 3 stretches are compositionally biased toward low complexity: residues 335 to 352 (DYDY…PYED), 375 to 387 (PTST…SSNP), and 462 to 471 (IIEPGMLIEG). An interrupted collagenous region region spans residues 446–560 (GIGGPRGEKG…ILQQARLALR (115 aa)). Residues 472–487 (PPGPEGPAGLPGPPGT) show a composition bias toward pro residues. Low complexity-rich tracts occupy residues 508–525 (LPGA…LMLP) and 561–572 (GPAGPMGLTGRP). The tract at residues 561-1572 (GPAGPMGLTG…GLPGPPGPPG (1012 aa)) is triple-helical region. Pro-572, Pro-578, and Pro-623 each carry 4-hydroxyproline. Lys-629 carries the 5-hydroxylysine modification. The residue at position 641 (Pro-641) is a 4-hydroxyproline. 5-hydroxylysine is present on Lys-644. 4-hydroxyproline is present on residues Pro-650, Pro-656, Pro-659, Pro-677, and Pro-680. Positions 673-688 (PRGLPGEPGPRGLLGP) are enriched in low complexity. 3-hydroxyproline occurs at positions 682 and 688. The span at 689 to 698 (KGPPGPPGPP) shows a compositional bias: pro residues. A 4-hydroxyproline mark is found at Pro-692, Pro-698, and Pro-707. Position 710 is a 5-hydroxylysine (Lys-710). Pro-719, Pro-722, Pro-728, and Pro-734 each carry 4-hydroxyproline. Low complexity predominate over residues 724-743 (QQGNPGAQGLPGPQGAIGPP). A 5-hydroxylysine modification is found at Lys-746. Positions 749-758 (LGKPGLPGMP) are enriched in low complexity. 5 positions are modified to 4-hydroxyproline: Pro-752, Pro-758, Pro-764, Pro-767, and Pro-773. Lys-776 bears the 5-hydroxylysine mark. 4-hydroxyproline is present on residues Pro-782 and Pro-791. Lys-797, Lys-806, Lys-809, and Lys-812 each carry 5-hydroxylysine. At Pro-818 the chain carries 4-hydroxyproline. 5-hydroxylysine is present on Lys-821. Pro-836 bears the 4-hydroxyproline mark. Over residues 839–848 (RGEDGPEGPK) the composition is skewed to basic and acidic residues. 2 positions are modified to 5-hydroxylysine: Lys-848 and Lys-866. 3 positions are modified to 4-hydroxyproline: Pro-872, Pro-875, and Pro-878. Position 884 is a 5-hydroxylysine (Lys-884). 4-hydroxyproline is present on residues Pro-890 and Pro-893. Lys-899 bears the 5-hydroxylysine mark. 4-hydroxyproline occurs at positions 905 and 908. Low complexity predominate over residues 910 to 919 (PRGQRGPTGP). Residues Pro-932 and Pro-947 each carry the 4-hydroxyproline modification. 2 stretches are compositionally biased toward low complexity: residues 973–992 (KDGL…QGKT) and 1001–1013 (VGPQ…TGPM). Pro-1019, Pro-1022, Pro-1025, and Pro-1031 each carry 4-hydroxyproline. Residues 1090–1106 (SPGERGPAGAAGPIGIP) show a composition bias toward low complexity. Residues 1108–1117 (RPGPQGPPGP) are compositionally biased toward pro residues. A 4-hydroxyproline mark is found at Pro-1223 and Pro-1226. A compositionally biased stretch (low complexity) spans 1261-1270 (PSGAPGADGP). A compositionally biased stretch (gly residues) spans 1296 to 1305 (GLPGEGGPLG). Pro residues-rich tracts occupy residues 1382–1400 (TGEP…PGPA) and 1456–1471 (SPGP…PPGL). Pro-1469 and Pro-1472 each carry 4-hydroxyproline. Residues 1487–1496 (PGLIGLIGPP) are compositionally biased toward low complexity. Positions 1528 to 1543 (PLGPPGPPGLPGPPGP) are enriched in pro residues. Low complexity predominate over residues 1544–1556 (KGAKGSSGPTGPK). The interval 1573 to 1607 (EVIQPLPIQASRTRRNIDASQLLDDGAGESYVDYA) is nonhelical region. Sulfotyrosine occurs at positions 1603 and 1606. Residues 1611–1839 (EEIFGSLNSL…GFEVGPACFL (229 aa)) enclose the Fibrillar collagen NC1 domain.

It belongs to the fibrillar collagen family. Trimers of two alpha 1(V) and one alpha 2(V) chains in most tissues and trimers of one alpha 1(V), one alpha 2(V), and one alpha 3(V) chains in placenta. Interacts with CSPG4. Prolines at the third position of the tripeptide repeating unit (G-X-Y) are hydroxylated in some or all of the chains. Post-translationally, sulfated on 40% of tyrosines. In terms of processing, hydroxylation on proline residues within the sequence motif, GXPG, is most likely to be 4-hydroxy as this fits the requirement for 4-hydroxylation in vertebrates. A high molecular weight form was detected in Schwann cells and peripheral nerve. A lower, probably processed form, is detected in all other tissues tested (at protein level).

It is found in the secreted. The protein localises to the extracellular space. Its subcellular location is the extracellular matrix. Its function is as follows. Type V collagen is a member of group I collagen (fibrillar forming collagen). It is a minor connective tissue component of nearly ubiquitous distribution. Type V collagen binds to DNA, heparan sulfate, thrombospondin, heparin, and insulin. In Rattus norvegicus (Rat), this protein is Collagen alpha-1(V) chain (Col5a1).